A 296-amino-acid chain; its full sequence is Giardin subunit alpha-4 (296 aa).

4 Annexin repeats span residues 3 to 72, 74 to 146, 153 to 223, and 226 to 294; these read ATVS…VHAW, SRFE…GWVK, KSIK…AHHW, and DPGQ…VFWR.

The protein belongs to the annexin family. Giardin subunit alpha subfamily.

The protein localises to the cytoplasm. Its subcellular location is the cytoskeleton. Giardins are involved in parasite attachment to the intestinal mucosa and in the cytoskeletal disassembly and reassembly that marks the transition from infectious trophozoite to transmissible cyst. They may interact with other cytoskeletal proteins such as microtubules in the microribbons or crossbridges, to maintain the integrity of the ventral disk. The chain is Giardin subunit alpha-4 from Giardia intestinalis (Giardia lamblia).